A 149-amino-acid chain; its full sequence is Arginine repressor (149 aa).

This sequence belongs to the ArgR family. Homohexamer.

It is found in the cytoplasm. It participates in amino-acid biosynthesis; L-arginine biosynthesis [regulation]. Its function is as follows. Regulates arginine biosynthesis genes. In Geobacillus stearothermophilus (Bacillus stearothermophilus), this protein is Arginine repressor (argR).